A 564-amino-acid chain; its full sequence is Homeobox protein unc-62 (564 aa).

Disordered regions lie at residues 40–59 (NEQF…ADPA), 216–270 (ERAS…VMGG), 293–313 (SSSS…LHST), 328–397 (PSTC…KVPK), and 455–503 (IDQN…PSSL). Positions 133–218 (SSDVCSSASF…PLDIVGDERA (86 aa)) constitute an MEIS N-terminal domain. The span at 219 to 230 (SSSQPPMSPGSM) shows a compositional bias: low complexity. Composition is skewed to polar residues over residues 328–344 (PSTC…TPLS) and 381–390 (LSDSANGSQN). Positions 392–454 (KRKVPKVFSK…NARRRIVQPM (63 aa)) form a DNA-binding region, homeobox; TALE-type. Composition is skewed to polar residues over residues 455–469 (IDQN…QMNV) and 494–503 (ANYSPDPSSL).

It belongs to the TALE/MEIS homeobox family. In terms of assembly, forms a heterodimer with homeobox ceh-60.

It localises to the nucleus. Functionally, acts redundantly with ceh-20 and ceh-40 to perform overlapping roles during embryogenesis. Required for postembryonic development of the ectoderm, including the Q, V and P cell lineages, playing a crucial role in ensuring that these cells and their descendants undergo their invariant patterns of cell division, migration, fusion and morphogenesis. Has a role in the mig-13 pathway to promote anterior migration of neuroblasts in the Q lineage. Required for multiple roles in regulating vulva development. Associates with homeobox ceh-60 to regulate gene expression, including repression of genes involved in innate immunity and activation of genes involved in vitellogenesis. Involved in lipid homeostasis, contributing to the formation of the cuticle. This chain is Homeobox protein unc-62 (unc-62), found in Caenorhabditis elegans.